Here is a 276-residue protein sequence, read N- to C-terminus: NH(3)-dependent NAD(+) synthetase (276 aa).

Gly43–Ser50 is a binding site for ATP. Residue Asp49 coordinates Mg(2+). Arg146 serves as a coordination point for deamido-NAD(+). Thr166 contributes to the ATP binding site. A Mg(2+)-binding site is contributed by Glu171. Lys179 and Asp186 together coordinate deamido-NAD(+). ATP-binding residues include Lys195 and Thr217. Residue His266 to Lys267 participates in deamido-NAD(+) binding.

Belongs to the NAD synthetase family. In terms of assembly, homodimer.

The enzyme catalyses deamido-NAD(+) + NH4(+) + ATP = AMP + diphosphate + NAD(+) + H(+). Its pathway is cofactor biosynthesis; NAD(+) biosynthesis; NAD(+) from deamido-NAD(+) (ammonia route): step 1/1. In terms of biological role, catalyzes the ATP-dependent amidation of deamido-NAD to form NAD. Uses ammonia as a nitrogen source. In Shewanella piezotolerans (strain WP3 / JCM 13877), this protein is NH(3)-dependent NAD(+) synthetase.